Consider the following 149-residue polypeptide: Nucleoside diphosphate kinase (149 aa).

K9, F57, R85, T91, R102, and N112 together coordinate ATP. The active-site Pros-phosphohistidine intermediate is the H115.

It belongs to the NDK family. In terms of assembly, homotetramer. The cofactor is Mg(2+).

The protein resides in the cytoplasm. The enzyme catalyses a 2'-deoxyribonucleoside 5'-diphosphate + ATP = a 2'-deoxyribonucleoside 5'-triphosphate + ADP. It catalyses the reaction a ribonucleoside 5'-diphosphate + ATP = a ribonucleoside 5'-triphosphate + ADP. Functionally, major role in the synthesis of nucleoside triphosphates other than ATP. The ATP gamma phosphate is transferred to the NDP beta phosphate via a ping-pong mechanism, using a phosphorylated active-site intermediate. The polypeptide is Nucleoside diphosphate kinase (Pelotomaculum thermopropionicum (strain DSM 13744 / JCM 10971 / SI)).